A 445-amino-acid polypeptide reads, in one-letter code: Gamma-glutamyl phosphate reductase (445 aa).

The protein belongs to the gamma-glutamyl phosphate reductase family.

The protein localises to the cytoplasm. It carries out the reaction L-glutamate 5-semialdehyde + phosphate + NADP(+) = L-glutamyl 5-phosphate + NADPH + H(+). It participates in amino-acid biosynthesis; L-proline biosynthesis; L-glutamate 5-semialdehyde from L-glutamate: step 2/2. Its function is as follows. Catalyzes the NADPH-dependent reduction of L-glutamate 5-phosphate into L-glutamate 5-semialdehyde and phosphate. The product spontaneously undergoes cyclization to form 1-pyrroline-5-carboxylate. This Persephonella marina (strain DSM 14350 / EX-H1) protein is Gamma-glutamyl phosphate reductase.